The following is a 338-amino-acid chain: MSSLRLLISDSYDPWFNLAVEECIFRQMPATQRVLFLWRNADTVVIGRAQNPWKECNTRRMEEDNVRLARRSSGGGAVFHDLGNTCFTFMAGKPEYDKSVSTAIVINALAQLGIPASASGRNDLVVETAEGPRKISGSAYRETMDRGFHHGTLLLNADLSRLSNYLNPDKKKLQAKGITSVRGRVANIHDLKPGVTHAQICEAVTEAFFAYYGERVAAEVISPDAFPDLPGFAETFARQSSWEWNFGQAPAFTHQLDERFVWGGVELHFDVEKGHITRTQLFTDSLNPAPLEALASRLQGCVYQASALQGVCEALVSEFPAQAAELREVGAWMAQAVR.

Residues 29–216 form the BPL/LPL catalytic domain; sequence PATQRVLFLW…AFFAYYGERV (188 aa). Residues R71, 76–79, and K134 each bind ATP; that span reads GAVF. K134 is a (R)-lipoate binding site.

Belongs to the LplA family. Monomer.

It is found in the cytoplasm. The catalysed reaction is L-lysyl-[lipoyl-carrier protein] + (R)-lipoate + ATP = N(6)-[(R)-lipoyl]-L-lysyl-[lipoyl-carrier protein] + AMP + diphosphate + H(+). Its pathway is protein modification; protein lipoylation via exogenous pathway; protein N(6)-(lipoyl)lysine from lipoate: step 1/2. The protein operates within protein modification; protein lipoylation via exogenous pathway; protein N(6)-(lipoyl)lysine from lipoate: step 2/2. In terms of biological role, catalyzes both the ATP-dependent activation of exogenously supplied lipoate to lipoyl-AMP and the transfer of the activated lipoyl onto the lipoyl domains of lipoate-dependent enzymes. The sequence is that of Lipoate-protein ligase A from Cronobacter sakazakii (strain ATCC BAA-894) (Enterobacter sakazakii).